The following is a 554-amino-acid chain: Dihydroxy-acid dehydratase (554 aa).

Asp78 contacts Mg(2+). Cys119 lines the [2Fe-2S] cluster pocket. The Mg(2+) site is built by Asp120 and Lys121. Lys121 bears the N6-carboxylysine mark. Cys192 serves as a coordination point for [2Fe-2S] cluster. Glu443 is a Mg(2+) binding site. Ser469 serves as the catalytic Proton acceptor.

This sequence belongs to the IlvD/Edd family. In terms of assembly, homodimer. [2Fe-2S] cluster is required as a cofactor. Mg(2+) serves as cofactor.

The catalysed reaction is (2R)-2,3-dihydroxy-3-methylbutanoate = 3-methyl-2-oxobutanoate + H2O. The enzyme catalyses (2R,3R)-2,3-dihydroxy-3-methylpentanoate = (S)-3-methyl-2-oxopentanoate + H2O. The protein operates within amino-acid biosynthesis; L-isoleucine biosynthesis; L-isoleucine from 2-oxobutanoate: step 3/4. It participates in amino-acid biosynthesis; L-valine biosynthesis; L-valine from pyruvate: step 3/4. Functionally, functions in the biosynthesis of branched-chain amino acids. Catalyzes the dehydration of (2R,3R)-2,3-dihydroxy-3-methylpentanoate (2,3-dihydroxy-3-methylvalerate) into 2-oxo-3-methylpentanoate (2-oxo-3-methylvalerate) and of (2R)-2,3-dihydroxy-3-methylbutanoate (2,3-dihydroxyisovalerate) into 2-oxo-3-methylbutanoate (2-oxoisovalerate), the penultimate precursor to L-isoleucine and L-valine, respectively. The chain is Dihydroxy-acid dehydratase from Shouchella clausii (strain KSM-K16) (Alkalihalobacillus clausii).